Reading from the N-terminus, the 366-residue chain is NAD(P)H-quinone oxidoreductase subunit 1, chloroplastic (366 aa).

A run of 8 helical transmembrane segments spans residues 29-49, 97-117, 130-150, 166-186, 202-222, 254-274, 307-327, and 340-360; these read WITA…LVIV, LLFS…YLVI, IGVF…FMAG, VAQA…ISLL, FGFW…FLIA, FGLF…FVTV, VIIG…ISIV, and LLNL…LLTA.

It belongs to the complex I subunit 1 family. As to quaternary structure, NDH is composed of at least 16 different subunits, 5 of which are encoded in the nucleus.

The protein resides in the plastid. Its subcellular location is the chloroplast thylakoid membrane. The enzyme catalyses a plastoquinone + NADH + (n+1) H(+)(in) = a plastoquinol + NAD(+) + n H(+)(out). It carries out the reaction a plastoquinone + NADPH + (n+1) H(+)(in) = a plastoquinol + NADP(+) + n H(+)(out). Functionally, NDH shuttles electrons from NAD(P)H:plastoquinone, via FMN and iron-sulfur (Fe-S) centers, to quinones in the photosynthetic chain and possibly in a chloroplast respiratory chain. The immediate electron acceptor for the enzyme in this species is believed to be plastoquinone. Couples the redox reaction to proton translocation, and thus conserves the redox energy in a proton gradient. The protein is NAD(P)H-quinone oxidoreductase subunit 1, chloroplastic of Anthoceros angustus (Hornwort).